The following is a 120-amino-acid chain: Glycine cleavage system H protein (120 aa).

The Lipoyl-binding domain occupies 17-99 (IATVGITAHA…RGAGWFFKLK (83 aa)). K58 carries the post-translational modification N6-lipoyllysine.

Belongs to the GcvH family. As to quaternary structure, the glycine cleavage system is composed of four proteins: P, T, L and H. The cofactor is (R)-lipoate.

Functionally, the glycine cleavage system catalyzes the degradation of glycine. The H protein shuttles the methylamine group of glycine from the P protein to the T protein. This is Glycine cleavage system H protein from Allorhizobium ampelinum (strain ATCC BAA-846 / DSM 112012 / S4) (Agrobacterium vitis (strain S4)).